Here is a 359-residue protein sequence, read N- to C-terminus: UDP-N-acetylglucosamine--N-acetylmuramyl-(pentapeptide) pyrophosphoryl-undecaprenol N-acetylglucosamine transferase (359 aa).

Residues 15 to 17 (TGG), Asn-127, Arg-166, Ser-191, Ile-245, 264 to 269 (ALTVSE), and Gln-290 each bind UDP-N-acetyl-alpha-D-glucosamine.

It belongs to the glycosyltransferase 28 family. MurG subfamily.

It localises to the cell inner membrane. The enzyme catalyses di-trans,octa-cis-undecaprenyl diphospho-N-acetyl-alpha-D-muramoyl-L-alanyl-D-glutamyl-meso-2,6-diaminopimeloyl-D-alanyl-D-alanine + UDP-N-acetyl-alpha-D-glucosamine = di-trans,octa-cis-undecaprenyl diphospho-[N-acetyl-alpha-D-glucosaminyl-(1-&gt;4)]-N-acetyl-alpha-D-muramoyl-L-alanyl-D-glutamyl-meso-2,6-diaminopimeloyl-D-alanyl-D-alanine + UDP + H(+). It functions in the pathway cell wall biogenesis; peptidoglycan biosynthesis. Its function is as follows. Cell wall formation. Catalyzes the transfer of a GlcNAc subunit on undecaprenyl-pyrophosphoryl-MurNAc-pentapeptide (lipid intermediate I) to form undecaprenyl-pyrophosphoryl-MurNAc-(pentapeptide)GlcNAc (lipid intermediate II). This is UDP-N-acetylglucosamine--N-acetylmuramyl-(pentapeptide) pyrophosphoryl-undecaprenol N-acetylglucosamine transferase from Pseudomonas putida (strain ATCC 47054 / DSM 6125 / CFBP 8728 / NCIMB 11950 / KT2440).